The sequence spans 315 residues: Ribonuclease Z (315 aa).

The Zn(2+) site is built by H61, H63, D65, H66, H151, D219, and H278. D65 acts as the Proton acceptor in catalysis.

The protein belongs to the RNase Z family. In terms of assembly, homodimer. It depends on Zn(2+) as a cofactor.

The enzyme catalyses Endonucleolytic cleavage of RNA, removing extra 3' nucleotides from tRNA precursor, generating 3' termini of tRNAs. A 3'-hydroxy group is left at the tRNA terminus and a 5'-phosphoryl group is left at the trailer molecule.. Functionally, zinc phosphodiesterase, which displays some tRNA 3'-processing endonuclease activity. Probably involved in tRNA maturation, by removing a 3'-trailer from precursor tRNA. The chain is Ribonuclease Z from Clostridium botulinum (strain Eklund 17B / Type B).